A 369-amino-acid polypeptide reads, in one-letter code: Phosphoribosyl pyrophosphate synthase-associated protein 2 (369 aa).

Met1 carries the N-acetylmethionine modification. 3 positions are modified to phosphoserine: Ser219, Ser227, and Ser233.

The protein belongs to the ribose-phosphate pyrophosphokinase family. Binds to PRPS1 and PRPS2.

Its function is as follows. Seems to play a negative regulatory role in 5-phosphoribose 1-diphosphate synthesis. The protein is Phosphoribosyl pyrophosphate synthase-associated protein 2 (Prpsap2) of Mus musculus (Mouse).